The following is a 1102-amino-acid chain: Endocytosis protein end4 (1102 aa).

The region spanning 9–139 (DHMQSDASLM…SFHAQHPEFN (131 aa)) is the ENTH domain. A disordered region spans residues 265–334 (PHDPPDLEGD…SEPEPIQDFW (70 aa)). Residues 292 to 305 (TGASTIAPQPTGTS) are compositionally biased toward polar residues. The stretch at 338 to 661 (TLDQQLAAQQ…ESLLQLSKLQ (324 aa)) forms a coiled coil. One can recognise an I/LWEQ domain in the interval 858–1100 (LLNAPGENIE…DMRKTSYHVA (243 aa)).

Belongs to the SLA2 family.

Its subcellular location is the cytoplasm. The protein localises to the cytoskeleton. Required for cellular morphogenesis and polarization of the cortical cytoskeleton. Required for establishment of new polarized growth zones where it acts in actin organization. Involved plasma membrane internalization and is essential for fluid-phase endocytosis. This chain is Endocytosis protein end4 (end4), found in Schizosaccharomyces pombe (strain 972 / ATCC 24843) (Fission yeast).